The primary structure comprises 419 residues: Tyrosine--tRNA ligase (419 aa).

Tyr34 serves as a coordination point for L-tyrosine. Positions 39-48 (PTADSLHLGH) match the 'HIGH' region motif. 2 residues coordinate L-tyrosine: Tyr169 and Gln173. Positions 229–233 (KFGKS) match the 'KMSKS' region motif. ATP is bound at residue Lys232. In terms of domain architecture, S4 RNA-binding spans 352-419 (LNIIDLLVTS…KKKYFVLNFK (68 aa)).

The protein belongs to the class-I aminoacyl-tRNA synthetase family. TyrS type 1 subfamily. Homodimer.

It is found in the cytoplasm. The enzyme catalyses tRNA(Tyr) + L-tyrosine + ATP = L-tyrosyl-tRNA(Tyr) + AMP + diphosphate + H(+). In terms of biological role, catalyzes the attachment of tyrosine to tRNA(Tyr) in a two-step reaction: tyrosine is first activated by ATP to form Tyr-AMP and then transferred to the acceptor end of tRNA(Tyr). This chain is Tyrosine--tRNA ligase, found in Streptococcus agalactiae serotype V (strain ATCC BAA-611 / 2603 V/R).